Reading from the N-terminus, the 186-residue chain is Elongation factor P (186 aa).

It belongs to the elongation factor P family.

Its subcellular location is the cytoplasm. Its pathway is protein biosynthesis; polypeptide chain elongation. In terms of biological role, involved in peptide bond synthesis. Stimulates efficient translation and peptide-bond synthesis on native or reconstituted 70S ribosomes in vitro. Probably functions indirectly by altering the affinity of the ribosome for aminoacyl-tRNA, thus increasing their reactivity as acceptors for peptidyl transferase. This Streptococcus agalactiae serotype Ia (strain ATCC 27591 / A909 / CDC SS700) protein is Elongation factor P.